A 405-amino-acid chain; its full sequence is Argininosuccinate synthase (405 aa).

ATP is bound by residues 10-18 (AYSGGVDTS) and A38. An L-citrulline-binding site is contributed by Y89. G119 is an ATP binding site. L-aspartate contacts are provided by T121, N125, and D126. N125 contributes to the L-citrulline binding site. R129, S177, S186, E262, and Y274 together coordinate L-citrulline.

The protein belongs to the argininosuccinate synthase family. Type 1 subfamily. As to quaternary structure, homotetramer.

The protein localises to the cytoplasm. It catalyses the reaction L-citrulline + L-aspartate + ATP = 2-(N(omega)-L-arginino)succinate + AMP + diphosphate + H(+). It participates in amino-acid biosynthesis; L-arginine biosynthesis; L-arginine from L-ornithine and carbamoyl phosphate: step 2/3. The sequence is that of Argininosuccinate synthase from Synechococcus sp. (strain RCC307).